Reading from the N-terminus, the 429-residue chain is 3-phosphoshikimate 1-carboxyvinyltransferase (429 aa).

The 3-phosphoshikimate site is built by K23, S24, and R28. Residue K23 participates in phosphoenolpyruvate binding. Residues G95 and R123 each contribute to the phosphoenolpyruvate site. Positions 168, 170, 316, and 343 each coordinate 3-phosphoshikimate. Position 170 (Q170) interacts with phosphoenolpyruvate. Catalysis depends on D316, which acts as the Proton acceptor. Residues R347 and R389 each contribute to the phosphoenolpyruvate site.

It belongs to the EPSP synthase family. As to quaternary structure, monomer.

It localises to the cytoplasm. The enzyme catalyses 3-phosphoshikimate + phosphoenolpyruvate = 5-O-(1-carboxyvinyl)-3-phosphoshikimate + phosphate. Its pathway is metabolic intermediate biosynthesis; chorismate biosynthesis; chorismate from D-erythrose 4-phosphate and phosphoenolpyruvate: step 6/7. Its function is as follows. Catalyzes the transfer of the enolpyruvyl moiety of phosphoenolpyruvate (PEP) to the 5-hydroxyl of shikimate-3-phosphate (S3P) to produce enolpyruvyl shikimate-3-phosphate and inorganic phosphate. This Bacillus cereus (strain AH187) protein is 3-phosphoshikimate 1-carboxyvinyltransferase.